The primary structure comprises 364 residues: Spermidine/putrescine import ATP-binding protein PotA (364 aa).

Residues 6-236 (IEIRQIYKSY…PANLHVAMFI (231 aa)) form the ABC transporter domain. An ATP-binding site is contributed by 38–45 (GPSGCGKT).

Belongs to the ABC transporter superfamily. Spermidine/putrescine importer (TC 3.A.1.11.1) family. The complex is composed of two ATP-binding proteins (PotA), two transmembrane proteins (PotB and PotC) and a solute-binding protein (PotD).

The protein localises to the cell inner membrane. It catalyses the reaction ATP + H2O + polyamine-[polyamine-binding protein]Side 1 = ADP + phosphate + polyamineSide 2 + [polyamine-binding protein]Side 1.. Its function is as follows. Part of the ABC transporter complex PotABCD involved in spermidine/putrescine import. Responsible for energy coupling to the transport system. This chain is Spermidine/putrescine import ATP-binding protein PotA, found in Legionella pneumophila (strain Lens).